The primary structure comprises 172 residues: Small ribosomal subunit protein uS5 (172 aa).

The region spanning 13–76 is the S5 DRBM domain; that stretch reads LIEKMVAVNR…DQARRSMIKV (64 aa).

It belongs to the universal ribosomal protein uS5 family. In terms of assembly, part of the 30S ribosomal subunit. Contacts proteins S4 and S8.

Functionally, with S4 and S12 plays an important role in translational accuracy. Its function is as follows. Located at the back of the 30S subunit body where it stabilizes the conformation of the head with respect to the body. The polypeptide is Small ribosomal subunit protein uS5 (Neisseria gonorrhoeae (strain ATCC 700825 / FA 1090)).